The sequence spans 209 residues: Protein Sxy (209 aa).

The protein belongs to the Sxy/TfoX family.

Its function is as follows. Induces low levels of natural DNA uptake by inducing transcription of the competence genes (the CRP-S regulon) required for DNA transformation. Induction of the CRP-S regulon also requires Sxy-activated promoter (CRP-S), cAMP receptor protein (CRP) and cAMP. Induces CRP-S site-containing genes which are involved in genome maintenance and transcription or encoding transposases and toxin-antitoxin pairs. This chain is Protein Sxy, found in Escherichia coli (strain K12).